Reading from the N-terminus, the 206-residue chain is MAAVRSKICGITRVEDALVAAEAGVDAIGLVFYPKSPRAVTLRQAKAIVAALPPFVTAVGLFVNATRGEVGGILDELPLDLLQFHGDETPADCEGHGRPYIKALRVRPGEDIAARCLEYCNASGILLDAYVPGVPGGTGESFDWSLVPRGLPKPVILAGGLSVRNVRVAIARVSPYAVDVSGGVEAEKGVKDAEKVRAFIREVRNA.

The protein belongs to the TrpF family.

The enzyme catalyses N-(5-phospho-beta-D-ribosyl)anthranilate = 1-(2-carboxyphenylamino)-1-deoxy-D-ribulose 5-phosphate. It participates in amino-acid biosynthesis; L-tryptophan biosynthesis; L-tryptophan from chorismate: step 3/5. This is N-(5'-phosphoribosyl)anthranilate isomerase from Azotobacter vinelandii (strain DJ / ATCC BAA-1303).